The chain runs to 310 residues: Methionyl-tRNA formyltransferase (310 aa).

A (6S)-5,6,7,8-tetrahydrofolate-binding site is contributed by 111 to 114 (SLLP).

The protein belongs to the Fmt family.

It catalyses the reaction L-methionyl-tRNA(fMet) + (6R)-10-formyltetrahydrofolate = N-formyl-L-methionyl-tRNA(fMet) + (6S)-5,6,7,8-tetrahydrofolate + H(+). Functionally, attaches a formyl group to the free amino group of methionyl-tRNA(fMet). The formyl group appears to play a dual role in the initiator identity of N-formylmethionyl-tRNA by promoting its recognition by IF2 and preventing the misappropriation of this tRNA by the elongation apparatus. The polypeptide is Methionyl-tRNA formyltransferase (Rhodopseudomonas palustris (strain TIE-1)).